Reading from the N-terminus, the 42-residue chain is Delta-hexatoxin-Ar1a (42 aa).

Cystine bridges form between Cys1/Cys15, Cys8/Cys20, Cys14/Cys31, and Cys16/Cys42.

The protein belongs to the neurotoxin 06 (delta-actx) family. In terms of tissue distribution, expressed by the venom gland.

It is found in the secreted. In terms of biological role, inhibits tetrodotoxin-sensitive voltage-gated sodium channels (Nav) by binding to site 3. It slows the inactivation, causes a prolongation of action potential duration resulting in repetitive firing in autonomic and motor nerve fibers. Does not depolarize the resting potential. Does not affect tetrodotoxin-resistant sodium channels. This lethal neurotoxin is active on both insect and mammalian voltage-gated sodium channels. The sequence is that of Delta-hexatoxin-Ar1a from Atrax robustus (Sydney funnel-web spider).